Reading from the N-terminus, the 521-residue chain is Type-1 glutamine synthetase 2 (521 aa).

In terms of domain architecture, GS beta-grasp spans 76-176 (NQIKISKSPF…FLMDFIGTNG (101 aa)). The region spanning 183–521 (PRSTLKKVIK…WELERYLEII (339 aa)) is the GS catalytic domain.

The protein belongs to the glutamine synthetase family.

It carries out the reaction L-glutamate + NH4(+) + ATP = L-glutamine + ADP + phosphate + H(+). In Dictyostelium discoideum (Social amoeba), this protein is Type-1 glutamine synthetase 2 (glnA2).